Reading from the N-terminus, the 317-residue chain is MGYDVTRFQGDVDEDLICPICSGVLEEPVQAPHCEHAFCNACITQWFSQQQTCPVDRSVVTVAHLRPVPRIMRNMLSKLQIACDNAVFGCSAVVRLDNLMSHLSDCEHNPKRPVTCEQGCGLEMPKDELPNHNCIKHLRSVVQQQQSRIAELEKTSAEHKHQLAEQKRDIQLLKAYMRAIRSVNPNLQNLEETIEYNEILEWVNSLQPARVTRWGGMISTPDAVLQAVIKRSLVESGCPASIVNELIENAHERSWPQGLATLETRQMNRRYYENYVAKRIPGKQAVVVMACENQHMGDDMVQEPGLVMIFAHGVEEI.

Residues 18–57 (CPICSGVLEEPVQAPHCEHAFCNACITQWFSQQQTCPVDR) form an RING-type; degenerate zinc finger. Residues 78-138 (KLQIACDNAV…LPNHNCIKHL (61 aa)) form an SIAH-type; degenerate zinc finger.

As to quaternary structure, interacts with USP8, ERBB3, PRKN and BIRC6. Interacts with CSF2RB, EPOR, IL3RA, MYD88 and TBK1. Interacts with Clec16a. Autoubiquitinated. Autoubiquitination leads to proteasomal degradation. Deubiquitinated by USP8 to get stabilized which induces apoptosis.

The enzyme catalyses S-ubiquitinyl-[E2 ubiquitin-conjugating enzyme]-L-cysteine + [acceptor protein]-L-lysine = [E2 ubiquitin-conjugating enzyme]-L-cysteine + N(6)-ubiquitinyl-[acceptor protein]-L-lysine.. The protein operates within protein modification; protein ubiquitination. In terms of biological role, acts as E3 ubiquitin-protein ligase and regulates the degradation of target proteins. Polyubiquitinates MYD88. Negatively regulates MYD88-dependent production of pro-inflammatory cytokines. Can promote TRIF-dependent production of type I interferon and inhibits infection with vesicular stomatitis virus. Also promotes activation of TBK1 and IRF3. Involved in the ubiquitination of erythropoietin (EPO) and interleukin-3 (IL-3) receptors. Thus, through maintaining basal levels of cytokine receptors, RNF41 is involved in the control of hematopoietic progenitor cell differentiation into myeloerythroid lineages. Contributes to the maintenance of steady-state ERBB3 levels by mediating its growth factor-independent degradation. Involved in the degradation of the inhibitor of apoptosis BIRC6 and thus is an important regulator of cell death by promoting apoptosis. Also acts as a PRKN modifier that accelerates its degradation, resulting in a reduction of PRKN activity, influencing the balance of intracellular redox state. The RNF41-PRKN pathway regulates autophagosome-lysosome fusion during late mitophagy. Mitophagy is a selective form of autophagy necessary for mitochondrial quality control. In Mus musculus (Mouse), this protein is E3 ubiquitin-protein ligase NRDP1 (Rnf41).